The primary structure comprises 92 residues: MARSVWKGPFVDGYLLKKAEKVREGGRNEVIKMWSRRSTILPQFVGLTFGVYNGNKHVPVSVSEEMVGHKFGEFAPTRTYYGHGADKKAKRK.

The protein belongs to the universal ribosomal protein uS19 family.

Its function is as follows. Protein S19 forms a complex with S13 that binds strongly to the 16S ribosomal RNA. The polypeptide is Small ribosomal subunit protein uS19 (Sinorhizobium medicae (strain WSM419) (Ensifer medicae)).